Consider the following 421-residue polypeptide: Imidazolonepropionase (421 aa).

Fe(3+) is bound by residues histidine 81 and histidine 83. Positions 81 and 83 each coordinate Zn(2+). Positions 90, 153, and 186 each coordinate 4-imidazolone-5-propanoate. Residue tyrosine 153 coordinates N-formimidoyl-L-glutamate. Histidine 251 contacts Fe(3+). Histidine 251 contacts Zn(2+). Glutamate 254 is a 4-imidazolone-5-propanoate binding site. Residue aspartate 326 participates in Fe(3+) binding. Aspartate 326 is a binding site for Zn(2+). Positions 328 and 330 each coordinate N-formimidoyl-L-glutamate. Residue serine 331 coordinates 4-imidazolone-5-propanoate.

The protein belongs to the metallo-dependent hydrolases superfamily. HutI family. Zn(2+) serves as cofactor. Requires Fe(3+) as cofactor.

The protein resides in the cytoplasm. The catalysed reaction is 4-imidazolone-5-propanoate + H2O = N-formimidoyl-L-glutamate. Its pathway is amino-acid degradation; L-histidine degradation into L-glutamate; N-formimidoyl-L-glutamate from L-histidine: step 3/3. In terms of biological role, catalyzes the hydrolytic cleavage of the carbon-nitrogen bond in imidazolone-5-propanoate to yield N-formimidoyl-L-glutamate. It is the third step in the universal histidine degradation pathway. In Streptococcus sanguinis (strain SK36), this protein is Imidazolonepropionase.